A 394-amino-acid polypeptide reads, in one-letter code: Phosphopentomutase (394 aa).

6 residues coordinate Mn(2+): aspartate 13, aspartate 286, histidine 291, aspartate 327, histidine 328, and histidine 339.

This sequence belongs to the phosphopentomutase family. Requires Mn(2+) as cofactor.

Its subcellular location is the cytoplasm. It catalyses the reaction 2-deoxy-alpha-D-ribose 1-phosphate = 2-deoxy-D-ribose 5-phosphate. It carries out the reaction alpha-D-ribose 1-phosphate = D-ribose 5-phosphate. It participates in carbohydrate degradation; 2-deoxy-D-ribose 1-phosphate degradation; D-glyceraldehyde 3-phosphate and acetaldehyde from 2-deoxy-alpha-D-ribose 1-phosphate: step 1/2. Its function is as follows. Isomerase that catalyzes the conversion of deoxy-ribose 1-phosphate (dRib-1-P) and ribose 1-phosphate (Rib-1-P) to deoxy-ribose 5-phosphate (dRib-5-P) and ribose 5-phosphate (Rib-5-P), respectively. The chain is Phosphopentomutase from Bacillus cereus (strain G9842).